The chain runs to 199 residues: Octanoyltransferase (199 aa).

Residues 27–199 (SNSCDELWLL…FVQYFLTQFK (173 aa)) form the BPL/LPL catalytic domain. Residues 66 to 73 (RGGQVTYH), 133 to 135 (SIG), and 146 to 148 (GIA) each bind substrate. C164 serves as the catalytic Acyl-thioester intermediate.

Belongs to the LipB family.

The protein resides in the cytoplasm. It carries out the reaction octanoyl-[ACP] + L-lysyl-[protein] = N(6)-octanoyl-L-lysyl-[protein] + holo-[ACP] + H(+). It functions in the pathway protein modification; protein lipoylation via endogenous pathway; protein N(6)-(lipoyl)lysine from octanoyl-[acyl-carrier-protein]: step 1/2. Catalyzes the transfer of endogenously produced octanoic acid from octanoyl-acyl-carrier-protein onto the lipoyl domains of lipoate-dependent enzymes. Lipoyl-ACP can also act as a substrate although octanoyl-ACP is likely to be the physiological substrate. The sequence is that of Octanoyltransferase from Legionella pneumophila (strain Paris).